A 301-amino-acid polypeptide reads, in one-letter code: Small ribosomal subunit biogenesis GTPase RsgA (301 aa).

The 162-residue stretch at 63–224 folds into the CP-type G domain; the sequence is INALVRPPIA…IADTPGFSSY (162 aa). Residues 112–115 and 167–175 contribute to the GTP site; these read SKAD and GQTGAGKST. Zn(2+) is bound by residues C248, C253, H255, and C261.

This sequence belongs to the TRAFAC class YlqF/YawG GTPase family. RsgA subfamily. In terms of assembly, monomer. Associates with 30S ribosomal subunit, binds 16S rRNA. It depends on Zn(2+) as a cofactor.

Its subcellular location is the cytoplasm. In terms of biological role, one of several proteins that assist in the late maturation steps of the functional core of the 30S ribosomal subunit. Helps release RbfA from mature subunits. May play a role in the assembly of ribosomal proteins into the subunit. Circularly permuted GTPase that catalyzes slow GTP hydrolysis, GTPase activity is stimulated by the 30S ribosomal subunit. This is Small ribosomal subunit biogenesis GTPase RsgA from Leuconostoc citreum (strain KM20).